We begin with the raw amino-acid sequence, 160 residues long: Deoxyuridine 5'-triphosphate nucleotidohydrolase (160 aa).

Substrate-binding positions include 72-74, N85, and 89-91; these read RSG and TID.

It belongs to the dUTPase family. The cofactor is Mg(2+).

It catalyses the reaction dUTP + H2O = dUMP + diphosphate + H(+). It functions in the pathway pyrimidine metabolism; dUMP biosynthesis; dUMP from dCTP (dUTP route): step 2/2. This enzyme is involved in nucleotide metabolism: it produces dUMP, the immediate precursor of thymidine nucleotides and it decreases the intracellular concentration of dUTP so that uracil cannot be incorporated into DNA. In Methylocella silvestris (strain DSM 15510 / CIP 108128 / LMG 27833 / NCIMB 13906 / BL2), this protein is Deoxyuridine 5'-triphosphate nucleotidohydrolase.